Reading from the N-terminus, the 265-residue chain is Proline-rich protein 23B (265 aa).

The segment covering 1–18 (MVSRPRSPSAFPAPWWGQ) has biased composition (low complexity). 2 disordered regions span residues 1-49 (MVSR…EDPA) and 226-265 (PSSP…LFQA). Residues 226–237 (PSSPLQPLPPSP) are compositionally biased toward pro residues. The segment covering 256 to 265 (CKARRRLFQA) has biased composition (basic residues).

This sequence belongs to the PRR23 family.

This chain is Proline-rich protein 23B (PRR23B), found in Homo sapiens (Human).